Reading from the N-terminus, the 430-residue chain is Enolase (430 aa).

Gln167 contributes to the (2R)-2-phosphoglycerate binding site. The active-site Proton donor is Glu209. Residues Asp245, Glu286, and Asp313 each contribute to the Mg(2+) site. (2R)-2-phosphoglycerate contacts are provided by Lys338, Arg367, Ser368, and Lys389. The active-site Proton acceptor is Lys338.

Belongs to the enolase family. Mg(2+) is required as a cofactor.

It localises to the cytoplasm. The protein resides in the secreted. It is found in the cell surface. The catalysed reaction is (2R)-2-phosphoglycerate = phosphoenolpyruvate + H2O. It participates in carbohydrate degradation; glycolysis; pyruvate from D-glyceraldehyde 3-phosphate: step 4/5. Catalyzes the reversible conversion of 2-phosphoglycerate (2-PG) into phosphoenolpyruvate (PEP). It is essential for the degradation of carbohydrates via glycolysis. This is Enolase from Synechococcus sp. (strain CC9902).